The following is a 138-amino-acid chain: MRILGLDVGDRTIGVAISDPLGWTAQGVKTIKRSNLKNDIKEIEDICNEYKVDKIVSGLPKNMNGTLGPQSEKVTEFCDILKKELEKEIIMWDERLTTVAAHKAMIEGDLSRAKRKKIVDKIAAIYILQGYLDSVYNK.

This sequence belongs to the YqgF nuclease family.

The protein localises to the cytoplasm. Its function is as follows. Could be a nuclease involved in processing of the 5'-end of pre-16S rRNA. The protein is Putative pre-16S rRNA nuclease of Clostridium tetani (strain Massachusetts / E88).